Here is a 300-residue protein sequence, read N- to C-terminus: MLKIGSHVGMSGKEAFFGSAKEAHSYDANTFMVYTGAPQNTRRKDISDLRLEEGFEFMKQHGISDIVIHAPYIINLGNSVNLDTYSLAVDFLAKEMERTKAFRSKYLVLHPGAHVGAGVDAGIKQIVQGLNEVLTRDTDLYIALETMAGKGSEIGRNFEELARIYDGVKYNDRLRVCFDTCHTNDAGYDVVNDFDGVIEQFDKLIGKEQIAVFHINDSKNDRGASKDRHENIGFGTLGFDAISYIVHHSDFIEVPKILETPYVSLPNEKEKSLPPYRYEIEMLRNSVFDPQILEKIQNNR.

His-69, His-110, Glu-145, Asp-179, His-182, His-214, Asp-227, His-229, and Glu-259 together coordinate Zn(2+).

The protein belongs to the AP endonuclease 2 family. Requires Zn(2+) as cofactor.

The enzyme catalyses Endonucleolytic cleavage to 5'-phosphooligonucleotide end-products.. In terms of biological role, endonuclease IV plays a role in DNA repair. It cleaves phosphodiester bonds at apurinic or apyrimidinic (AP) sites, generating a 3'-hydroxyl group and a 5'-terminal sugar phosphate. This is Probable endonuclease 4 from Lachnoclostridium phytofermentans (strain ATCC 700394 / DSM 18823 / ISDg) (Clostridium phytofermentans).